The following is a 173-amino-acid chain: Ribosomal RNA large subunit methyltransferase H (173 aa).

L89 and G121 together coordinate S-adenosyl-L-methionine.

Belongs to the RNA methyltransferase RlmH family. In terms of assembly, homodimer.

Its subcellular location is the cytoplasm. It carries out the reaction pseudouridine(1915) in 23S rRNA + S-adenosyl-L-methionine = N(3)-methylpseudouridine(1915) in 23S rRNA + S-adenosyl-L-homocysteine + H(+). Specifically methylates the pseudouridine at position 1915 (m3Psi1915) in 23S rRNA. This is Ribosomal RNA large subunit methyltransferase H from Chelativorans sp. (strain BNC1).